The chain runs to 354 residues: Multiple sugar-binding periplasmic receptor ChvE (354 aa).

The first 25 residues, 1–25, serve as a signal peptide directing secretion; it reads MKSIISLTAAAAIGVAMFVAPAFAA.

The protein belongs to the bacterial solute-binding protein 2 family.

It localises to the periplasm. Functionally, required for effective transcriptional induction of the vir genes by monosaccharides in response to plant signals and for normal growth and chemotaxis towards certain sugars. Functions as a periplasmic multiple sugar-binding receptor protein. It does not interact with a transport system. This chain is Multiple sugar-binding periplasmic receptor ChvE (chvE), found in Rhizobium radiobacter (Agrobacterium tumefaciens).